The primary structure comprises 142 residues: Hemoglobin subunit alpha-3 (142 aa).

A Globin domain is found at 2 to 142 (VLSAADKSNV…VSTVLTSKYR (141 aa)). Residue His59 participates in O2 binding. His88 serves as a coordination point for heme b.

It belongs to the globin family. Heterotetramer of two alpha chains and two beta chains. Red blood cells.

In terms of biological role, involved in oxygen transport from the lung to the various peripheral tissues. The sequence is that of Hemoglobin subunit alpha-3 from Bubalus bubalis (Domestic water buffalo).